Here is a 436-residue protein sequence, read N- to C-terminus: Protein GOLM2 (436 aa).

N-acetylmethionine is present on methionine 1. Topologically, residues 1-14 (MVGFGANRRAGRLP) are cytoplasmic. The helical; Signal-anchor for type II membrane protein transmembrane segment at 15–35 (SLVLVVLLVVIVVLAFNYWSI) threads the bilayer. Residues 35 to 198 (ISSRHVLLQE…EEQKQETQKI (164 aa)) adopt a coiled-coil conformation. At 36 to 436 (SSRHVLLQEE…YGKQHFNDVL (401 aa)) the chain is on the lumenal side. Residues 225 to 247 (ADKNEEPSSNHIPHGKEQIKRGG) show a composition bias toward basic and acidic residues. Residues 225 to 436 (ADKNEEPSSN…YGKQHFNDVL (212 aa)) form a disordered region. Residues serine 233 and serine 275 each carry the phosphoserine modification. Residues 305–321 (NHNGNPGTSKQNPSSPL) show a composition bias toward polar residues. Phosphoserine is present on residues serine 328 and serine 332. Basic and acidic residues predominate over residues 344 to 362 (ATKDRVSDFHKLKQSRFFD). Phosphoserine is present on serine 366. Positions 399–418 (YNEEEDGDGGEEDVQDDEER) are enriched in acidic residues. Residues 426 to 436 (DYGKQHFNDVL) are compositionally biased toward basic and acidic residues.

Belongs to the GOLM family.

The protein resides in the membrane. This is Protein GOLM2 from Homo sapiens (Human).